The sequence spans 265 residues: Undecaprenyl-diphosphatase 1 (265 aa).

Helical transmembrane passes span 4–24, 42–62, 84–104, 108–128, 184–204, 217–237, and 245–265; these read IITA…PISS, AKTF…ILYH, FHVF…HDVI, LFQP…MIFA, SEFS…LDLL, MFAV…VTFL, and LKPF…FVLL.

The protein belongs to the UppP family.

The protein resides in the cell membrane. It catalyses the reaction di-trans,octa-cis-undecaprenyl diphosphate + H2O = di-trans,octa-cis-undecaprenyl phosphate + phosphate + H(+). In terms of biological role, catalyzes the dephosphorylation of undecaprenyl diphosphate (UPP). Confers resistance to bacitracin. This chain is Undecaprenyl-diphosphatase 1, found in Bacillus anthracis.